The primary structure comprises 105 residues: MIPGEIQVAEGVIELNVGRKTVKIRVENTGDRPVQIGSHYHFYEVNPALSFDRELTKGFRLNIASGTAVRFEPGQGREVELVEYAGTKTIYGFRGEVMGKLVGAE.

This sequence belongs to the urease beta subunit family. Heterotrimer of UreA (gamma), UreB (beta) and UreC (alpha) subunits. Three heterotrimers associate to form the active enzyme.

The protein localises to the cytoplasm. The enzyme catalyses urea + 2 H2O + H(+) = hydrogencarbonate + 2 NH4(+). It functions in the pathway nitrogen metabolism; urea degradation; CO(2) and NH(3) from urea (urease route): step 1/1. This Marinomonas sp. (strain MWYL1) protein is Urease subunit beta.